The chain runs to 147 residues: MKVIFLQDVKGQGKKGEVKDLSEGYVRNFLLPKKLVKEATDSNVKTLDAQKRSEDKRKEQEKLDAQELGKKLEELTVKVTGKAGEGGRLFGAISSKQVAQALEDQYKIKVDKRKLEMDAIRALGVTQIKVKLHNEVTVTLKVHVVEE.

Residues 44 to 63 form a disordered region; it reads VKTLDAQKRSEDKRKEQEKL. The span at 48-63 shows a compositional bias: basic and acidic residues; sequence DAQKRSEDKRKEQEKL.

Belongs to the bacterial ribosomal protein bL9 family.

Functionally, binds to the 23S rRNA. This chain is Large ribosomal subunit protein bL9, found in Brevibacillus brevis (strain 47 / JCM 6285 / NBRC 100599).